Reading from the N-terminus, the 205-residue chain is MALHMVLVVLSLLPLLEAQNPEPANITLGIPITNETLKWLSDKWFYMGAAFRDPVFKQAVQTIQTEYFYLTPNLINDTIELREFQTTDDQCVYNFTHLGVQRENGTLSKCAGAVKIFAHLIVLKKHGTFMLAFNLTDENRGLSFYAKKPDLSPELRKIFQQAVKDVGMDESEIVFVDWTKDKCSEQQKQQLELEKETKKETKKDP.

Positions 1–18 (MALHMVLVVLSLLPLLEA) are cleaved as a signal peptide. N-linked (GlcNAc...) asparagine glycosylation is found at asparagine 25, asparagine 34, asparagine 76, asparagine 94, asparagine 104, and asparagine 134. A disulfide bridge connects residues cysteine 91 and cysteine 183.

It belongs to the calycin superfamily. Lipocalin family.

The protein localises to the secreted. In terms of biological role, functions as a transport protein in the blood stream. Binds various ligands in the interior of its beta-barrel domain. Appears to function in modulating the activity of the immune system during the acute-phase reaction. The protein is Alpha-1-acid glycoprotein (Orm1) of Rattus norvegicus (Rat).